We begin with the raw amino-acid sequence, 214 residues long: Endoplasmic reticulum vesicle protein 25 (214 aa).

The first 20 residues, 1–20, serve as a signal peptide directing secretion; it reads MRSISTLLFIISTFISLVSA. Residues 21–183 lie on the Lumenal side of the membrane; the sequence is LQLAIPATTN…TNESTNSRVK (163 aa). The GOLD domain occupies 33-124; that stretch reads PFCIRDFVQE…VREIELDVES (92 aa). The helical transmembrane segment at 184–204 threads the bilayer; sequence WFSILVITSLVGLGAWQVQYL. The Cytoplasmic portion of the chain corresponds to 205–214; it reads RHYFKVKHII.

This sequence belongs to the EMP24/GP25L family.

Its subcellular location is the endoplasmic reticulum membrane. The protein resides in the golgi apparatus membrane. Its function is as follows. Constituent of COPII-coated endoplasmic reticulum-derived transport vesicles. Required for efficient transport of a subset of secretory proteins to the Golgi. Facilitates retrograde transport from the Golgi to the endoplasmic reticulum. The chain is Endoplasmic reticulum vesicle protein 25 (ERV25) from Debaryomyces hansenii (strain ATCC 36239 / CBS 767 / BCRC 21394 / JCM 1990 / NBRC 0083 / IGC 2968) (Yeast).